Consider the following 581-residue polypeptide: Pentatricopeptide repeat-containing protein At3g56550 (581 aa).

PPR repeat units follow at residues 70–104 (STSD…SVSR), 106–140 (DLFT…GFLD), 141–171 (DAIV…MPVR), 172–206 (DLVS…GVCG), 207–241 (DSYT…RCES), 242–272 (CVFV…MRKR), 273–307 (DVLT…GVRP), 308–338 (NAIT…MSSQ), and 344–378 (NVKH…EDPV). The tract at residues 379-454 (LWRTLLGSCK…VPGWSWIEIG (76 aa)) is type E motif. A type E(+) motif region spans residues 455 to 485 (DQVHKFVVDDKMHPESAVIYSELGEVINRAI). The segment at 486–581 (LAGYKPEDSN…DGICSCNDYW (96 aa)) is type DYW motif.

The protein belongs to the PPR family. PCMP-H subfamily.

This chain is Pentatricopeptide repeat-containing protein At3g56550 (PCMP-H80), found in Arabidopsis thaliana (Mouse-ear cress).